The chain runs to 150 residues: Ribonuclease K6 (150 aa).

Positions 1 to 23 are cleaved as a signal peptide; the sequence is MVLCFPLLLLLLVLWGPVCPLHA. H38 acts as the Proton acceptor in catalysis. 4 cysteine pairs are disulfide-bonded: C46/C104, C60/C114, C78/C129, and C85/C92. N-linked (GlcNAc...) asparagine glycosylation occurs at N55. Residues 61–65 and K86 contribute to the substrate site; that span reads KHQNT. The N-linked (GlcNAc...) asparagine glycan is linked to N100. Residue R105 coordinates substrate. The active-site Proton donor is the H145.

It belongs to the pancreatic ribonuclease family. As to quaternary structure, interacts (via N-terminus) with bacterial lipopolysaccharide (LPS). As to expression, highly expressed in spleen (at protein level). Has little or no expression in healthy kidneys (at protein level). Detected in interstitial leukocytes in infected kidneys (at protein level). Expressed in ureter where it localizes to urothelial and submucosal leukocytes (at protein level). Strong expression in lung and thymus, and lower expression in heart, placenta, pancreas, liver, brain and skeletal muscle. Also expressed in monocytes and neutrophils.

The protein localises to the secreted. It is found in the lysosome. It localises to the cytoplasmic granule. Functionally, ribonuclease which shows a preference for the pyrimidines uridine and cytosine. Has potent antibacterial activity against a range of Gram-positive and Gram-negative bacteria, including P.aeruginosa, A.baumanii, M.luteus, S.aureus, E.faecalis, E.faecium, S.saprophyticus and E.coli. Causes loss of bacterial membrane integrity, and also promotes agglutination of Gram-negative bacteria. Probably contributes to urinary tract sterility. Bactericidal activity is independent of RNase activity. In Homo sapiens (Human), this protein is Ribonuclease K6 (RNASE6).